The chain runs to 144 residues: MRLNTLSPAPGRVTSRKRVGRGIGSGLGKTAGRGHKGLKSRSGGTVKPGFEGGQMPLQKRLPKYGFTSRIGRVSAEIRLSELNKVEADVIDLDALLKADLISTNIKRAKIFLSGELKKAVTVKGLAVTKGAKAAIEAAGGKVEE.

The interval 1–54 is disordered; sequence MRLNTLSPAPGRVTSRKRVGRGIGSGLGKTAGRGHKGLKSRSGGTVKPGFEGGQ. Residues 21 to 31 are compositionally biased toward gly residues; the sequence is RGIGSGLGKTA.

The protein belongs to the universal ribosomal protein uL15 family. In terms of assembly, part of the 50S ribosomal subunit.

Its function is as follows. Binds to the 23S rRNA. The protein is Large ribosomal subunit protein uL15 of Teredinibacter turnerae (strain ATCC 39867 / T7901).